A 2822-amino-acid chain; its full sequence is Piezo-type mechanosensitive ion channel component 2 (2822 aa).

Topologically, residues 1-12 (MASEVVCGLIFR) are cytoplasmic. Residues 13–24 (LLLPICLAVACA) traverse the membrane as a helical segment. At 25–30 (FRYNGL) the chain is on the extracellular side. The helical transmembrane segment at 31-43 (SFVYLIYLLLIPL) threads the bilayer. Topologically, residues 44–50 (FSEPTKA) are cytoplasmic. The chain crosses the membrane as a helical span at residues 51–76 (TMQGHTGRLLQSLCITSLSFLLLHII). At 77-122 (FHITLASLEAQHRITPAYNCSTWEKTFRQIGFESLKGADAGNGIRV) the chain is on the extracellular side. Asparagine 95 carries an N-linked (GlcNAc...) asparagine glycan. Residues 123–141 (FVPDIGMFIASLTIWLVCR) form a helical membrane-spanning segment. Topologically, residues 142–221 (TIVKKPDTEE…KEFIGNMITT (80 aa)) are cytoplasmic. The chain crosses the membrane as a helical span at residues 222 to 237 (AGKVVVTILLGSSGMM). At 238-240 (LPS) the chain is on the extracellular side. A helical membrane pass occupies residues 241-258 (LTSAVYFFVFLGLCTWWS). Residues 259–264 (WCRTFD) lie on the Cytoplasmic side of the membrane. A helical membrane pass occupies residues 265-287 (PLLFGCLCVLLAIFTAGHLIGLY). At 288 to 335 (LYQFQFFQEAVPPNDYYARLFGIKSVIQTDCASTWKIIVNPDLSWYHH) the chain is on the extracellular side. A helical transmembrane segment spans residues 336–355 (ANPILLLVMYYTLATLIRIW). Residues 356–492 (LQEPLVQEEM…SVRMHAMVAV (137 aa)) are Cytoplasmic-facing. Positions 450 to 481 (YRWEPSEESSEKKEEEEDKREDSEGEGSQEEK) are disordered. A coiled-coil region spans residues 455–482 (SEESSEKKEEEEDKREDSEGEGSQEEKR). Residues 463–477 (EEEEDKREDSEGEGS) show a composition bias toward acidic residues. Residues 493-514 (FQFIMKQSYICALIAMMAWSIT) form a helical membrane-spanning segment. Over 515–519 (YHSWL) the chain is Extracellular. Residues 520 to 531 (TFVLLIWSCTLW) traverse the membrane as a helical segment. Residues 532 to 535 (MIRN) lie on the Cytoplasmic side of the membrane. A helical membrane pass occupies residues 536 to 562 (RRKYAMISSPFMVVYANLLLVLQYIWS). Topologically, residues 563 to 583 (FELPEIKKVPGFLEKKEPGEL) are extracellular. The helical transmembrane segment at 584–614 (ASKILFTITFWLLLRQHLTEQKALREKEALL) threads the bilayer. Residues 615-689 (SEVKIGSQEL…GNLVVALFIK (75 aa)) lie on the Cytoplasmic side of the membrane. Acidic residues-rich tracts occupy residues 624-633 (LEEKEDEELQ) and 643-652 (EKEEEEEEEI). The segment at 624-668 (LEEKEDEELQDVQVEGEPTEKEEEEEEEIKEERHEVKKEEEEEVE) is disordered. Basic and acidic residues predominate over residues 653–662 (KEERHEVKKE). The chain crosses the membrane as a helical span at residues 690–703 (YWIYVCGGMFFFVS). At 704 to 709 (FEGKIV) the chain is on the extracellular side. The helical transmembrane segment at 710-728 (MYKIIYMVLFLFCVALYQV) threads the bilayer. Topologically, residues 729 to 737 (HYEWWRKIL) are cytoplasmic. Residues 738 to 757 (KYFWMSVVIYTMLVLIFIYT) traverse the membrane as a helical segment. At 758 to 789 (YQFENFPGLWQNMTGLKKEKLEDLGLKQFTVA) the chain is on the extracellular side. Residues 790 to 811 (ELFTRIFIPTSFLLVCILHLHY) traverse the membrane as a helical segment. Over 812–957 (FHDRFLELTD…QVFMWWILEL (146 aa)) the chain is Cytoplasmic. Serine 856 is subject to Phosphoserine. The segment covering 875–901 (QKLAESGEERPEECVKKTEKGEAGKDS) has biased composition (basic and acidic residues). The interval 875–919 (QKLAESGEERPEECVKKTEKGEAGKDSDESEEEEDEEEESEEEES) is disordered. Positions 902 to 919 (DESEEEEDEEEESEEEES) are enriched in acidic residues. Residues 958–973 (HIIKIVSSYIIWVTVK) form a helical membrane-spanning segment. The Extracellular segment spans residues 974-979 (EVSLFN). The helical transmembrane segment at 980 to 989 (YVFLISWAFA) threads the bilayer. Over 990–997 (LPYAKLRR) the chain is Cytoplasmic. The helical transmembrane segment at 998 to 1018 (AASSVCTVWTCVIIVCKMLYQ) threads the bilayer. At 1019–1074 (LQTIKPENFSVNCSLPNENQTNIPLHELNKSLLYSAPVDPTEWVGLRKSSPLLVYL) the chain is on the extracellular side. N-linked (GlcNAc...) asparagine glycosylation occurs at asparagine 1030. A disulfide bridge connects residues cysteine 1031 and cysteine 1209. The chain crosses the membrane as a helical span at residues 1075 to 1099 (RNNLLMLAILAFEVTVYRHQEYYRG). The Cytoplasmic portion of the chain corresponds to 1100–1140 (RNNLTAPVSKTIFHDITRLHLDDGLINCAKYFVNYFFYKFG). The helical transmembrane segment at 1141-1155 (LETCFLMSVNVIGQR) threads the bilayer. Over 1156-1157 (MD) the chain is Extracellular. A helical membrane pass occupies residues 1158-1171 (FYAMIHACWLIGVL). The Cytoplasmic portion of the chain corresponds to 1172-1182 (YRRRRKAIAEV). The chain crosses the membrane as a helical span at residues 1183–1202 (WPKYCCFLACIITFQYFVCI). Residues 1203–1239 (GIPPAPCRDYPWRFKGAYFNDNIIKWLYFPDFIVRPN) are Extracellular-facing. The chain crosses the membrane as a helical span at residues 1240 to 1260 (PVFLVYDFMLLLCASLQRQIF). The Cytoplasmic portion of the chain corresponds to 1261-1314 (EDENKAAVRIMAGDNVEICMNLDAASFSQHNPVPDFIHCRSYLDMSKVIIFSYL). Residues 1315-1327 (FWFVLTIIFITGT) form a helical membrane-spanning segment. Topologically, residues 1328–1333 (TRISIF) are extracellular. A helical membrane pass occupies residues 1334–1346 (CMGYLVACFYFLL). At 1347-1355 (FGGDLLLKP) the chain is on the cytoplasmic side. A helical membrane pass occupies residues 1356-1381 (IKSILRYWDWLIAYNVFVITMKNILS). Over 1382–1430 (IGACGYIGALVRNSCWLIQAFSLACTVKGYQMPEDDSRCKLPSGEAGII) the chain is Extracellular. The chain crosses the membrane as a helical span at residues 1431 to 1447 (WDSICFAFLLLQRRVFM). Topologically, residues 1448 to 1991 (SYYFLHVVAD…YAMYNTLVAR (544 aa)) are cytoplasmic. Residues 1475 to 1515 (TIVKAVKARIEEEKKSMDQLKRQMDRIKARQQKYKKGKERM) adopt a coiled-coil conformation. Disordered stretches follow at residues 1505–1551 (QQKY…KKKQ) and 1611–1653 (LRQR…KKSD). The span at 1611–1621 (LRQRRKEKKKL) shows a compositional bias: basic residues. The span at 1622 to 1633 (AREEQKERRKGS) shows a compositional bias: basic and acidic residues. The chain crosses the membrane as a helical span at residues 1992–2006 (SEMVCYFVIILNHMT). Topologically, residues 2007–2013 (SASIITL) are extracellular. A helical transmembrane segment spans residues 2014–2025 (LLPILIFLWAML). The Cytoplasmic segment spans residues 2026–2031 (SVPRPS). The helical transmembrane segment at 2032-2053 (RRFWMMAIVYTEVAIVVKYFFQ) threads the bilayer. The Extracellular portion of the chain corresponds to 2054–2086 (FGFFPWNKDLEIYKERPYFPPNIIGVEKKEGYV). A helical transmembrane segment spans residues 2087-2105 (LYDLIQLLALFFHRSILKC). The Cytoplasmic segment spans residues 2106-2259 (HGLWDEDDIV…HPDYSAVTDV (154 aa)). Disordered regions lie at residues 2120-2139 (DKEG…GSSD) and 2164-2205 (IRRK…SVLS). Residues 2170-2197 (CSSSQISPRSSFSSNRSKRGSTSTRNSS) show a composition bias toward low complexity. Residues 2260–2279 (YVLMFLADTVDFIIIVFGFW) traverse the membrane as a helical segment. The Extracellular portion of the chain corresponds to 2280–2301 (AFGKHSAAADITSSLSEDQVPG). A helical transmembrane segment spans residues 2302–2322 (PFLVMVLIQFGTMVVDRALYL). The Cytoplasmic segment spans residues 2323–2326 (RKTV). A helical membrane pass occupies residues 2327–2350 (LGKVIFQVILVFGIHFWMFFILPG). The Extracellular segment spans residues 2351–2359 (VTERKFSQN). Residues 2360 to 2382 (LVAQLWYFVKCVYFGLSAYQIRC) traverse the membrane as a helical segment. The Cytoplasmic portion of the chain corresponds to 2383–2467 (GYPTRVLGNF…YPQPRGQKKK (85 aa)). A helical transmembrane segment spans residues 2468–2491 (KAVKYGMGGMIIVLLICIVWFPLL). Topologically, residues 2492–2739 (FMSLIKSVAG…PSLGFLAGYG (248 aa)) are extracellular. N-linked (GlcNAc...) asparagine glycosylation is present at asparagine 2692. The helical transmembrane segment at 2740–2760 (IMGLYASVVLVIGKFVREFFS) threads the bilayer. Over 2761–2822 (GISHSIMFEE…MIKWTREKTN (62 aa)) the chain is Cytoplasmic.

Belongs to the PIEZO (TC 1.A.75) family. As to quaternary structure, homotrimer; the homotrimer forms a propeller-shaped Piezo channel with a cation-ion conducting pore. Heterotrimeric interaction may occur between PIEZO1 and PIEZO2. Interacts with STOM13. Interacts with TMC7; the interaction inhibits PIEZO2-conducted mechanically activated currents. Interacts with TMC1; the interaction may be part of the MET complex. Interacts with MDFIC (via C-terminus); the interaction prolongs Piezo channel inactivation. Interacts with MDFI (via C-terminus); the interaction prolongs Piezo channel inactivation. As to expression, expressed in bladder, colon, and lung, but less abundant in kidney or skin. Strong expression is observed in dorsal root ganglia (DRG) sensory neurons. Expressed in a wide range of cutaneous low-threshold mechanoreceptors (LTMRs), including Merkel cells and Meissner's corpuscles. Expressed in sensory neurons. Expressed in cochlear inner and outer hair cells and vestibular organ hair cells. Expressed in pulmonary neuroepithelial cell bodies. Expressed in bladder urothelium and sensory neurons of the lower urinary tract. Expressed in sensory endings of proprioceptors innervating muscle spindles and Golgi tendon organs.

It is found in the cell membrane. It catalyses the reaction Ca(2+)(in) = Ca(2+)(out). Its activity is regulated as follows. Regulated by auxillary subunits MDFIC and MDFI. Channel activity is inhibited by TMEM120aa. Phosphatidic acid and lysophosphatidic acid inhibit Piezo2 channel activity. In terms of biological role, pore-forming subunit of the mechanosensitive non-specific cation Piezo channel required for rapidly adapting mechanically activated (MA) currents and has a key role in sensing touch and tactile pain. Piezo channels are homotrimeric three-blade propeller-shaped structures that utilize a cap-motion and plug-and-latch mechanism to gate their ion-conducting pathways. Expressed in sensory neurons, is essential for diverse physiological processes, including respiratory control, systemic metabolism, urinary function, and proprioception. Mediates airway stretch sensing, enabling efficient respiration at birth and maintaining normal breathing in adults. It regulates brown and beige adipose tissue morphology and function, preventing systemic hypermetabolism. In the lower urinary tract, acts as a sensor in both the bladder urothelium and innervating sensory neurons and is required for bladder-stretch sensing and urethral micturition reflexes, ensuring proper urinary function. Additionally, Piezo2 serves as the principal mechanotransducer in proprioceptors, facilitating proprioception and coordinated body movements. In inner ear hair cells, PIEZO1/2 subunits may constitute part of the mechanotransducer (MET) non-selective cation channel complex where they may act as pore-forming ion-conducting component in the complex. Required for Merkel-cell mechanotransduction. Plays a major role in light-touch mechanosensation. The sequence is that of Piezo-type mechanosensitive ion channel component 2 from Mus musculus (Mouse).